The chain runs to 250 residues: Triosephosphate isomerase (250 aa).

9-11 (NWK) serves as a coordination point for substrate. Catalysis depends on histidine 96, which acts as the Electrophile. Glutamate 166 acts as the Proton acceptor in catalysis. Substrate is bound by residues glycine 172, serine 212, and 233-234 (GG).

It belongs to the triosephosphate isomerase family. In terms of assembly, homodimer.

The protein resides in the cytoplasm. It carries out the reaction D-glyceraldehyde 3-phosphate = dihydroxyacetone phosphate. Its pathway is carbohydrate biosynthesis; gluconeogenesis. It functions in the pathway carbohydrate degradation; glycolysis; D-glyceraldehyde 3-phosphate from glycerone phosphate: step 1/1. Functionally, involved in the gluconeogenesis. Catalyzes stereospecifically the conversion of dihydroxyacetone phosphate (DHAP) to D-glyceraldehyde-3-phosphate (G3P). The sequence is that of Triosephosphate isomerase from Chlorobium phaeovibrioides (strain DSM 265 / 1930) (Prosthecochloris vibrioformis (strain DSM 265)).